Consider the following 197-residue polypeptide: ADP-ribosylation factor-like protein 16 (197 aa).

GTP-binding positions include 30-37 (GATGVGKT), 82-86 (ELGGC), and 139-142 (NKID).

The protein belongs to the small GTPase superfamily. Arf family. As to quaternary structure, interacts with RIGI; this interaction is GTP-dependent and induced upon viral infection; this interaction suppresses the RNA sensing activity of RIGI.

It is found in the cytoplasm. Its function is as follows. May suppress the RNA sensing activity of RIGI in a GTP-dependent. The protein is ADP-ribosylation factor-like protein 16 of Homo sapiens (Human).